The following is a 419-amino-acid chain: Peptide chain release factor subunit 1 (419 aa).

The protein belongs to the eukaryotic release factor 1 family. Heterodimer of two subunits, one of which binds GTP.

The protein localises to the cytoplasm. In terms of biological role, directs the termination of nascent peptide synthesis (translation) in response to the termination codons UAA, UAG and UGA. The sequence is that of Peptide chain release factor subunit 1 from Methanococcus maripaludis (strain C7 / ATCC BAA-1331).